We begin with the raw amino-acid sequence, 91 residues long: Auxin-responsive protein SAUR20 (91 aa).

Belongs to the ARG7 family.

The protein localises to the cell membrane. Functionally, functions as a positive effector of cell expansion through modulation of auxin transport. The sequence is that of Auxin-responsive protein SAUR20 from Arabidopsis thaliana (Mouse-ear cress).